The primary structure comprises 493 residues: UDP-N-acetylmuramoylalanine--D-glutamate ligase (493 aa).

126 to 132 is a binding site for ATP; it reads GTNGKTT.

This sequence belongs to the MurCDEF family.

It is found in the cytoplasm. It carries out the reaction UDP-N-acetyl-alpha-D-muramoyl-L-alanine + D-glutamate + ATP = UDP-N-acetyl-alpha-D-muramoyl-L-alanyl-D-glutamate + ADP + phosphate + H(+). The protein operates within cell wall biogenesis; peptidoglycan biosynthesis. In terms of biological role, cell wall formation. Catalyzes the addition of glutamate to the nucleotide precursor UDP-N-acetylmuramoyl-L-alanine (UMA). This chain is UDP-N-acetylmuramoylalanine--D-glutamate ligase, found in Mycolicibacterium smegmatis (strain ATCC 700084 / mc(2)155) (Mycobacterium smegmatis).